Reading from the N-terminus, the 209-residue chain is Pyroglutamyl-peptidase 1 (209 aa).

Active-site residues include glutamate 85, cysteine 149, and histidine 168.

This sequence belongs to the peptidase C15 family. As to quaternary structure, monomer.

The protein resides in the cytoplasm. The enzyme catalyses Release of an N-terminal pyroglutamyl group from a polypeptide, the second amino acid generally not being Pro.. Inhibited by transition metal ions including Ni(2+), Zn(2+), and Cu(2+) and by sulfhydryl-blocking agents. Removes 5-oxoproline from various penultimate amino acid residues except L-proline. The sequence is that of Pyroglutamyl-peptidase 1 (PGPEP1) from Homo sapiens (Human).